Here is a 63-residue protein sequence, read N- to C-terminus: uncharacterized protein (63 aa).

A helical transmembrane segment spans residues 20-40 (IVLLISFIFFFGRFIYSSVGA).

Its subcellular location is the membrane. This is an uncharacterized protein from Escherichia coli O157:H7.